A 315-amino-acid polypeptide reads, in one-letter code: MTTVVKHFLRDDDLTPEQQAEVLELAARLKKAPFAERPLEGPRGVGVIFEKNSTRTRFSFEMGIAQLGGHAIVVDGRSTQLGREETLQDTGRVLSRYVDAVVWRTFGQKRLEAMASGADVPIVNALSDEFHPCQVLADLQTLAERKGSLKGLKLTYLGDGANNMAHSLMLGGVTAGVDVTIASPEGFAPLPWVVEAARARAADTGATITLTEDPQAAVVGADALVTDTWTSMGQENDGLDRVGPFRPFQINEALLAKAAADAVVLHCLPAHRGEEITDEVLDGPQSVVWDEAENRLHAQKALLVWLLAQRTGNRP.

Carbamoyl phosphate is bound by residues 53–56 (STRT), Q80, R104, and 131–134 (HPCQ). L-ornithine contacts are provided by residues N163, D227, and 231 to 232 (SM). Carbamoyl phosphate is bound by residues 267–268 (CL) and R295.

Belongs to the aspartate/ornithine carbamoyltransferase superfamily. OTCase family.

It is found in the cytoplasm. It carries out the reaction carbamoyl phosphate + L-ornithine = L-citrulline + phosphate + H(+). The protein operates within amino-acid degradation; L-arginine degradation via ADI pathway; carbamoyl phosphate from L-arginine: step 2/2. In terms of biological role, reversibly catalyzes the transfer of the carbamoyl group from carbamoyl phosphate (CP) to the N(epsilon) atom of ornithine (ORN) to produce L-citrulline. In Rhodococcus opacus (strain B4), this protein is Ornithine carbamoyltransferase.